Consider the following 704-residue polypeptide: Elongation factor G (704 aa).

The tr-type G domain occupies 8-291 (ANVRNIGIMA…AVIEYLPSPV (284 aa)). GTP-binding positions include 17 to 24 (AHIDAGKT), 90 to 94 (DTPGH), and 144 to 147 (NKMD).

This sequence belongs to the TRAFAC class translation factor GTPase superfamily. Classic translation factor GTPase family. EF-G/EF-2 subfamily.

The protein resides in the cytoplasm. Catalyzes the GTP-dependent ribosomal translocation step during translation elongation. During this step, the ribosome changes from the pre-translocational (PRE) to the post-translocational (POST) state as the newly formed A-site-bound peptidyl-tRNA and P-site-bound deacylated tRNA move to the P and E sites, respectively. Catalyzes the coordinated movement of the two tRNA molecules, the mRNA and conformational changes in the ribosome. In Chlorobium phaeobacteroides (strain BS1), this protein is Elongation factor G.